Reading from the N-terminus, the 1318-residue chain is Major viral transcription factor ICP4 homolog (1318 aa).

A compositionally biased stretch (basic residues) spans 1-11 (MSAEQRKKKKT). Disordered regions lie at residues 1 to 108 (MSAE…ADGV), 123 to 324 (EAVR…RLER), 542 to 580 (LTGA…AASP), 606 to 630 (PASA…GGRR), 780 to 873 (LAAP…TPAP), and 1291 to 1318 (AGLA…LFGE). The segment covering 44-56 (SPDPADGPPPTPN) has biased composition (pro residues). The span at 74-91 (EENEDEADDAAADADADE) shows a compositional bias: acidic residues. The segment covering 133-143 (PERDGAQEEAA) has biased composition (basic and acidic residues). Positions 159-174 (GEENDDDDDDDDDDDR) are enriched in acidic residues. The segment covering 206–226 (APRRHHHHHHHRRRRAPRRRS) has biased composition (basic residues). Composition is skewed to low complexity over residues 228–257 (ASDS…SASS) and 268–278 (RAPASAADHAA). The segment covering 299–308 (APRPSPPRAE) has biased composition (pro residues). Residues 309-320 (PAPARTPAATAG) are compositionally biased toward low complexity. A DNA-binding region spans residues 319 to 547 (AGRLERRRAR…ENAALTGART (229 aa)). Basic and acidic residues predominate over residues 547–564 (TPDDGGDANRHDGDDARG). Over residues 566 to 580 (PAAAAAPLPSAAASP) the composition is skewed to low complexity. Pro residues-rich tracts occupy residues 799-808 (ARAPPGGAPR) and 821-843 (AAAP…PPRP). Over residues 844–863 (AALTRRPAEGPDPQGGWRRQ) the composition is skewed to low complexity. Positions 1303-1318 (DMDAELEDDDDGLFGE) are enriched in acidic residues.

It belongs to the herpesviridae ICP4 family. In terms of assembly, homodimer. Interacts with transcriptional regulator ICP27; this interaction is required for proper incorporation of ICP4 into virions. Interacts with host TBP; theis interaction helps the stabilization of the pre-initiation complex on specific promoters. Interacts with host GTF2B. Post-translationally, ADP-ribosylated. In terms of processing, the long stretch of Ser is a major site of phosphorylation. Only the phosphorylated forms are capable of interacting with beta or gamma genes.

The protein resides in the host nucleus. It is found in the host cytoplasm. The protein localises to the virion tegument. Functionally, plays an essential role in the regulation of viral gene expression by both activating and repressing host RNA polymerase II-mediated transcription. Binds with high affinity to the sequence 5'-ATCGTC-3'. Activates transcription by recruiting a form of the host TFIID to promoters and stabilizing the pre-initiation complex formation. Negatively regulates its own transcription. This immediate early (IE) protein is absolutely necessary for the transition from IE transcription to later viral gene transcription. In addition, binds to the host promoters of CXCR3 ligands including CXCL9, CXCL10, and CXCL11 and interacts with TBP to activate their transcription. In turn, mediates CD4+ T-cell migration. The sequence is that of Major viral transcription factor ICP4 homolog (ICP4) from Human herpesvirus 2 (strain HG52) (HHV-2).